The primary structure comprises 60 residues: UPF0434 protein NMA0874 (60 aa).

This sequence belongs to the UPF0434 family.

In Neisseria meningitidis serogroup A / serotype 4A (strain DSM 15465 / Z2491), this protein is UPF0434 protein NMA0874.